A 76-amino-acid polypeptide reads, in one-letter code: Esculentin-2SN1 (76 aa).

An N-terminal signal peptide occupies residues 1–22; that stretch reads MFTMKKSLLFLFFLGTISLSLC. A propeptide spanning residues 23-37 is cleaved from the precursor; it reads EQERGADEDDGGEEV. A disulfide bond links cysteine 70 and cysteine 76.

The protein belongs to the frog skin active peptide (FSAP) family. Esculentin subfamily. In terms of tissue distribution, expressed by the skin glands.

It is found in the secreted. Antimicrobial peptide. Active against some Gram-negative and a variety of Gram-positive bacterial strains. Not active against fungi. Shows very weak hemolytic activity against human erythrocytes. The sequence is that of Esculentin-2SN1 from Sylvirana spinulosa (Fine-spined frog).